A 933-amino-acid polypeptide reads, in one-letter code: Progesterone receptor (933 aa).

The tract at residues 1–157 is disordered; that stretch reads MTELKAKGPR…PEDPPAAPAT (157 aa). The interval 1–164 is AF3; mediates transcriptional activation (in isoform B); the sequence is MTELKAKGPR…PATQRVLSPL (164 aa). The modulating, Pro-Rich stretch occupies residues 1–566; that stretch reads MTELKAKGPR…YSFESLPQKI (566 aa). A Glycyl lysine isopeptide (Lys-Gly) (interchain with G-Cter in SUMO) cross-link involves residue K7. S20 is subject to Phosphoserine. The LXXL motif 1 signature appears at 55–59; the sequence is LDGLL. Residues S81 and S102 each carry the phosphoserine modification. The LXXL motif 2 motif lies at 115–119; that stretch reads LDTLL. Phosphoserine occurs at positions 130 and 162. The tract at residues 165–305 is mediates transcriptional transrepression (in isoform A); it reads MSRSGCKVGD…LATTVMDFIH (141 aa). Positions 183–187 match the Nuclear localization signal motif; the sequence is KVLPR. 2 positions are modified to phosphoserine: S190 and S213. A disordered region spans residues 195–241; that stretch reads LLLPASESPHWSGAPVKPSPQAAAVEVEEEDGSESEESAGPLLKGKP. Acidic residues predominate over residues 220–231; sequence EVEEEDGSESEE. Low complexity predominate over residues 232–241; the sequence is SAGPLLKGKP. S294 carries the phosphoserine; by MAPK1 modification. Residues 331–351 are disordered; sequence GGAGAASAFAPPRSSPCASST. Residues 335–350 show a composition bias toward low complexity; sequence AASAFAPPRSSPCASS. S345 carries the phosphoserine; by MAPK modification. K388 participates in a covalent cross-link: Glycyl lysine isopeptide (Lys-Gly) (interchain with G-Cter in SUMO); alternate. K388 is covalently cross-linked (Glycyl lysine isopeptide (Lys-Gly) (interchain with G-Cter in ubiquitin); alternate). Position 400 is a phosphoserine; by CDK2 (S400). The tract at residues 415–452 is disordered; it reads PDFPLGPPPPLPPRATPSRPGEAAVTAAPASASVSSAS. Positions 418 to 429 are enriched in pro residues; the sequence is PLGPPPPLPPRA. Residues 430–452 are compositionally biased toward low complexity; it reads TPSRPGEAAVTAAPASASVSSAS. The tract at residues 456-546 is AF1; mediates transcriptional activation; it reads STLECILYKA…VYPPYLNYLR (91 aa). Residue K531 forms a Glycyl lysine isopeptide (Lys-Gly) (interchain with G-Cter in SUMO) linkage. 2 consecutive NR C4-type zinc fingers follow at residues 567–587 and 603–627; these read CLIC…CGSC and CAGR…LRKC. The segment at residues 567-639 is a DNA-binding region (nuclear receptor); it reads CLICGDEASG…AGMVLGGRKF (73 aa). A Phosphoserine modification is found at S676. An NR LBD domain is found at 679–913; the sequence is QDIQLIPPLI…EFPEMMSEVI (235 aa). Positions 687–933 are AF2; mediates transcriptional activation; it reads LINLLMSIEP…MVKPLLFHKK (247 aa). R766 is a progesterone binding site.

Belongs to the nuclear hormone receptor family. NR3 subfamily. As to quaternary structure, interacts with SMARD1 and UNC45A. Interacts with CUEDC2; the interaction promotes ubiquitination, decreases sumoylation, and represses transcriptional activity. Interacts with PIAS3; the interaction promotes sumoylation of PR in a hormone-dependent manner, inhibits DNA-binding, and alters nuclear export. Interacts with SP1; the interaction requires ligand-induced phosphorylation on Ser-345 by ERK1/2 MAPK. Interacts with PRMT2. Isoform A interacts with NCOR2. Isoform B (but not isoform A) interacts with NCOA2 and NCOA1. Isoform B (but not isoform A) interacts with KLF9. Interacts with GTF2B. In terms of processing, phosphorylated on multiple serine sites. Several of these sites are hormone-dependent. Phosphorylation on Ser-294 occurs preferentially on isoform B, is highly hormone-dependent and modulates ubiquitination and sumoylation on Lys-388. Phosphorylation on Ser-102 and Ser-345 also requires induction by hormone. Basal phosphorylation on Ser-81, Ser-162, Ser-190 and Ser-400 is increased in response to progesterone and can be phosphorylated in vitro by the CDK2-A1 complex. Increased levels of phosphorylation on Ser-400 also in the presence of EGF, heregulin, IGF, PMA and FBS. Phosphorylation at this site by CDK2 is ligand-independent, and increases nuclear translocation and transcriptional activity. Phosphorylation at Ser-162 and Ser-294, but not at Ser-190, is impaired during the G(2)/M phase of the cell cycle. Phosphorylation on Ser-345 by ERK1/2 MAPK is required for interaction with SP1. Post-translationally, sumoylation is hormone-dependent and represses transcriptional activity. Sumoylation on all three sites is enhanced by PIAS3. Desumoylated by SENP1. Sumoylation on Lys-388, the main site of sumoylation, is repressed by ubiquitination on the same site, and modulated by phosphorylation at Ser-294. Ubiquitination is hormone-dependent and represses sumoylation on the same site. Promoted by MAPK-mediated phosphorylation on Ser-294. Ubiquitinated by UBR5, leading to its degradation: UBR5 specifically recognizes and binds ligand-bound PGR when it is not associated with coactivators (NCOAs). In presence of NCOAs, the UBR5-degron is not accessible, preventing its ubiquitination and degradation. In terms of processing, palmitoylated by ZDHHC7 and ZDHHC21. Palmitoylation is required for plasma membrane targeting and for rapid intracellular signaling via ERK and AKT kinases and cAMP generation. As to expression, in reproductive tissues the expression of isoform A and isoform B varies as a consequence of developmental and hormonal status. Isoform A and isoform B are expressed in comparable levels in uterine glandular epithelium during the proliferative phase of the menstrual cycle. Expression of isoform B but not of isoform A persists in the glands during mid-secretory phase. In the stroma, isoform A is the predominant form throughout the cycle. Heterogeneous isoform expression between the glands of the endometrium basalis and functionalis is implying region-specific responses to hormonal stimuli.

Its subcellular location is the nucleus. The protein localises to the cytoplasm. It localises to the mitochondrion outer membrane. Its function is as follows. The steroid hormones and their receptors are involved in the regulation of eukaryotic gene expression and affect cellular proliferation and differentiation in target tissues. Depending on the isoform, progesterone receptor functions as a transcriptional activator or repressor. Ligand-dependent transdominant repressor of steroid hormone receptor transcriptional activity including repression of its isoform B, MR and ER. Transrepressional activity may involve recruitment of corepressor NCOR2. Functionally, transcriptional activator of several progesteron-dependent promoters in a variety of cell types. Involved in activation of SRC-dependent MAPK signaling on hormone stimulation. In terms of biological role, increases mitochondrial membrane potential and cellular respiration upon stimulation by progesterone. This Homo sapiens (Human) protein is Progesterone receptor (PGR).